Reading from the N-terminus, the 200-residue chain is Chromophore lyase CpcS/CpeS (200 aa).

The protein belongs to the CpcS/CpeS biliprotein lyase family.

In terms of biological role, covalently attaches a chromophore to Cys residue(s) of phycobiliproteins. This is Chromophore lyase CpcS/CpeS from Synechococcus sp. (strain WH8020).